A 228-amino-acid polypeptide reads, in one-letter code: Cytochrome c oxidase subunit 2 (228 aa).

The Mitochondrial intermembrane segment spans residues 1–26 (MSTWANLGLQDSASPLMEQLIFFHDH). Residues 27–48 (ALLILVMITVLVGYLMFMLFFN) form a helical membrane-spanning segment. The Mitochondrial matrix portion of the chain corresponds to 49-62 (NYVNRFLLHGQLIE). Residues 63-82 (MIWTILPAIILLFIALPSLR) traverse the membrane as a helical segment. The Mitochondrial intermembrane portion of the chain corresponds to 83 to 228 (LLYLLDEINE…FIKWISSNNS (146 aa)). Residues H161, C196, E198, C200, H204, and M207 each coordinate Cu cation. E198 contacts Mg(2+).

Belongs to the cytochrome c oxidase subunit 2 family. As to quaternary structure, component of the cytochrome c oxidase (complex IV, CIV), a multisubunit enzyme composed of a catalytic core of 3 subunits and several supernumerary subunits. The complex exists as a monomer or a dimer and forms supercomplexes (SCs) in the inner mitochondrial membrane with ubiquinol-cytochrome c oxidoreductase (cytochrome b-c1 complex, complex III, CIII). The cofactor is Cu cation.

The protein resides in the mitochondrion inner membrane. The catalysed reaction is 4 Fe(II)-[cytochrome c] + O2 + 8 H(+)(in) = 4 Fe(III)-[cytochrome c] + 2 H2O + 4 H(+)(out). Its function is as follows. Component of the cytochrome c oxidase, the last enzyme in the mitochondrial electron transport chain which drives oxidative phosphorylation. The respiratory chain contains 3 multisubunit complexes succinate dehydrogenase (complex II, CII), ubiquinol-cytochrome c oxidoreductase (cytochrome b-c1 complex, complex III, CIII) and cytochrome c oxidase (complex IV, CIV), that cooperate to transfer electrons derived from NADH and succinate to molecular oxygen, creating an electrochemical gradient over the inner membrane that drives transmembrane transport and the ATP synthase. Cytochrome c oxidase is the component of the respiratory chain that catalyzes the reduction of oxygen to water. Electrons originating from reduced cytochrome c in the intermembrane space (IMS) are transferred via the dinuclear copper A center (CU(A)) of subunit 2 and heme A of subunit 1 to the active site in subunit 1, a binuclear center (BNC) formed by heme A3 and copper B (CU(B)). The BNC reduces molecular oxygen to 2 water molecules using 4 electrons from cytochrome c in the IMS and 4 protons from the mitochondrial matrix. This chain is Cytochrome c oxidase subunit 2 (mt:CoII), found in Drosophila simulans (Fruit fly).